Here is a 491-residue protein sequence, read N- to C-terminus: Trypanothione reductase (491 aa).

35–51 is an FAD binding site; the sequence is DLQKHHGPPHYAALGGT. A disulfide bridge links Cys52 with Cys57. The active-site Proton acceptor is His461.

It belongs to the class-I pyridine nucleotide-disulfide oxidoreductase family. Homodimer. The cofactor is FAD. In terms of processing, the N-terminus is blocked.

It is found in the cytoplasm. The enzyme catalyses trypanothione + NADP(+) = trypanothione disulfide + NADPH + H(+). Its function is as follows. Trypanothione is the parasite analog of glutathione; this enzyme is the equivalent of glutathione reductase. The chain is Trypanothione reductase (TPR) from Crithidia fasciculata.